The primary structure comprises 511 residues: Arginine-containing cyclodipeptide synthase eshA (511 aa).

Residues 413 to 417 carry the Conserved DDXXE motif motif; that stretch reads DDSAE.

The protein belongs to the arginine-containing cyclodipeptide synthase family.

The enzyme catalyses L-arginyl-tRNA(Arg) + L-leucyl-tRNA(Leu) = cyclo(L-arginyl-L-leucyl) + tRNA(Arg) + tRNA(Leu) + 2 H(+). It participates in secondary metabolite biosynthesis. In terms of biological role, arginine-containing cyclodipeptide synthase; part of the cluster that mediates the biosynthesis of a highly modified cyclo-arginine-leucine dipeptide (cRW). Within the pathway, eshA acts as the scaffold-generating enzyme and is responsible for formation of the cyclo-Arg-Leu diketopiperazine (cRL) from L-arginyl-tRNA(Arg) + L-Leucyl-tRNA(Leu). Additional enzymes from the cluster then further modify the cyclo-Arg-Leu diketopiperazine (cRW) scaffold. This chain is Arginine-containing cyclodipeptide synthase eshA, found in Penicillium shearii (Eupenicillium shearii).